A 103-amino-acid polypeptide reads, in one-letter code: Small ribosomal subunit protein uS10 (103 aa).

This sequence belongs to the universal ribosomal protein uS10 family. In terms of assembly, part of the 30S ribosomal subunit.

In terms of biological role, involved in the binding of tRNA to the ribosomes. The chain is Small ribosomal subunit protein uS10 from Campylobacter lari (strain RM2100 / D67 / ATCC BAA-1060).